The following is a 3476-amino-acid chain: Abnormal spindle-like microcephaly-associated protein homolog (3476 aa).

Positions 1-30 are disordered; that stretch reads MANRRVGRGCWEVSPTERRPPAGLRGPAAE. Phosphoserine is present on residues serine 280, serine 283, serine 367, serine 392, and serine 425. Disordered stretches follow at residues 416–443 and 562–581; these read SNENSQVPQSPEDWRKSEVSPRIPECQG and APSSTTASVARKRKSDGSME. Serine 604 carries the post-translational modification Phosphoserine. In terms of domain architecture, Calponin-homology (CH) 1 spans 919–1055; it reads KASKEILLAF…LLWKIAFAFQ (137 aa). The stretch at 1056 to 1077 forms a coiled coil; sequence VDISLNLDQLKEEIAFLKHTKS. Residue serine 1102 is modified to Phosphoserine. One can recognise a Calponin-homology (CH) 2 domain in the interval 1109-1260; it reads SENIKLLMDW…YLSFLCARLL (152 aa). 40 consecutive IQ domains span residues 1346–1377, 1392–1421, 1581–1612, 1604–1633, 1631–1660, 1654–1683, 1727–1756, 1750–1781, 1800–1829, 1823–1852, 1873–1902, 1896–1927, 1946–1977, 1969–2000, 2019–2048, 2042–2073, 2092–2123, 2115–2146, 2165–2196, 2238–2269, 2261–2292, 2310–2341, 2333–2364, 2383–2414, 2406–2437, 2456–2487, 2479–2510, 2529–2560, 2623–2652, 2664–2695, 2687–2718, 2737–2766, 2858–2889, 2908–2937, 2931–2962, 2953–2984, 3028–3059, 3078–3109, 3180–3209, and 3203–3234; these read QNKAASLIQGYWRRYSTRRRFLKLKYYSIILQ, YLWATVTIQRHWRAYLRRKQDQQRYEMLKS, LKKTIIKLQAHVRKHQQRQKYKKMKKAAVIIQ, MKKAAVIIQTHFRAYIFARKVLASYQKTRS, TRSAVIVLQSAYRGMQARKMYVHILTSVIK, ILTSVIKIQSYYRAHVSKKEFLSLKNATIK, MRESCIKLQAFVRGYLVRKQMRLQRKAVIS, QRKAVISLQSYFRMRKARQYYLKMYKAIIVIQ, VKKAATCLQAAYRGYKVRQLIKQQSIAALK, QSIAALKIQSAFRGYNKRVKYQSVLQSIIK, TKAALISLQSAYRGWKVRKQIRREHQAVLK, EHQAVLKIQSAFRMAKAQKQFRLFKTAALVIQ, LRHAVLMLQSMWRGKTLRRQLQRQHKCAVIIQ, QHKCAVIIQSYYRMHVQQKKWKIMKKAALLIQ, TKAAVVTLQSAYRGMKVRKRIKDCNKAAVT, CNKAAVTIQSKYRAYKTKKKYATYRASAIIIQ, LKKTAIKIQSVYRGIRVRRHIQHMHRAATFIK, MHRAATFIKAVFKMHQSRISYHTMRKAAIVIQ, ILKAVKILQASFRGVRVRRTLRKMQIAATLIQ, LRHSVIYIQAIFRGKKARRHLKMMHIAATLIQ, MHIAATLIQRRFRTLMMRRRFLSLKKTAILIQ, VQNAVIKIQSSYRRWMIRKRMREMHRAATFIQ, MHRAATFIQATFRMHRLHMRYQTLKQASVVIQ, QRHSAVILQAAFRGMKTRRHLKSMHSSATLIQ, MHSSATLIQSRFRSLLVRRRFISLKKATIFVQ, LRKAAITIQSSYRRLMVKKKLQEMQRAAILIQ, MQRAAILIQATFRMHRTYTTFQTWKHASILIQ, QWHSAVVIQAAYKGMKARHLLREKHKASIIIQ, QHQAAIIIQKHCKAFKIRKHYLHLRATVVS, RTQAVICIQSYYRGFKVRKDIQNMHQAATLIQ, MHQAATLIQSFYRMHRAKVDYETKKTAIVVIQ, VQKSVRTIQAAFRGMEVRQKLKNVSEEKVA, QKRAAITLQHYFRTWQTRKQFLLYRKAAVVLQ, IRSSVIIIQARSKGFIQKRKFQEIKNSTIK, IKNSTIKIQAMWRRYRAKKYLCKVKAACKIQA, KVKAACKIQAWYRCWRAHKEYLAILKAVKIIQ, RHRAACLIQAHYRGYKGRQVFLRQKSAALIIQ, FKKSTVILQALVRGWLVRKRILEQRAKIRLLH, RNRAASVIQKAVRHFLLRKKQEKFTSGIIK, and FTSGIIKIQALWRGYSWRKKNDCTKIKAIRLS.

Its subcellular location is the cytoplasm. It is found in the cytoskeleton. The protein resides in the spindle. The protein localises to the nucleus. Its function is as follows. Probable role in mitotic spindle regulation and coordination of mitotic processes. May have a preferential role in regulating neurogenesis. This Gorilla gorilla gorilla (Western lowland gorilla) protein is Abnormal spindle-like microcephaly-associated protein homolog (ASPM).